We begin with the raw amino-acid sequence, 522 residues long: Protein RCC2 (522 aa).

Positions 1-83 (MPRKKAAAAA…TAGKAGGAAV (83 aa)) are disordered. Ser16 bears the Phosphoserine mark. Thr20 carries the post-translational modification Phosphothreonine. A compositionally biased stretch (basic residues) spans 24 to 36 (GPRKRGGPAGRKR). 6 positions are modified to phosphoserine: Ser43, Ser44, Ser45, Ser46, Ser50, and Ser51. Residues 71–82 (RPATAGKAGGAA) show a composition bias toward low complexity. Lys92 and Lys124 each carry N6-acetyllysine. 7 RCC1 repeats span residues 103–165 (KGQL…SLLI), 168–219 (EGKL…ALTE), 221–271 (GSVF…IMDC), 273–347 (GNLY…VLDS), 348–401 (QKRV…AVSE), 403–447 (GGLF…VAAD), and 448–501 (ESTI…VIAR). Lys293 bears the N6-acetyllysine mark. The segment at 318–325 (KTKDGQIL) is required for interaction with RAC1. Thr342 is subject to Phosphothreonine. An N6-acetyllysine modification is found at Lys377. Over residues 502-515 (DESETEKEKIKKLP) the composition is skewed to basic and acidic residues. The tract at residues 502 to 522 (DESETEKEKIKKLPEYNPRTL) is disordered.

As to quaternary structure, interacts with RAC1. Interacts with nucleotide-free and with GDP and GTP-bound forms of RAC1, with a slight preference for GDP-bound RAC1. Binds preferentially to the nucleotide-free form of RAC1. Interacts with CORO1C. Interacts with microtubules.

It is found in the nucleus. Its subcellular location is the nucleolus. It localises to the cytoplasm. The protein resides in the cytoskeleton. The protein localises to the chromosome. It is found in the centromere. Its subcellular location is the spindle. It localises to the midbody. The protein resides in the cell membrane. Functionally, multifunctional protein that may affect its functions by regulating the activity of small GTPases, such as RAC1 and RALA. Required for normal progress through the cell cycle, both during interphase and during mitosis. Required for the presence of normal levels of MAD2L1, AURKB and BIRC5 on inner centromeres during mitosis, and for normal attachment of kinetochores to mitotic spindles. Required for normal organization of the microtubule cytoskeleton in interphase cells. Functions as guanine nucleotide exchange factor (GEF) for RALA. Interferes with the activation of RAC1 by guanine nucleotide exchange factors. Prevents accumulation of active, GTP-bound RAC1, and suppresses RAC1-mediated reorganization of the actin cytoskeleton and formation of membrane protrusions. Required for normal cellular responses to contacts with the extracellular matrix of adjacent cells, and for directional cell migration in response to a fibronectin gradient (in vitro). The chain is Protein RCC2 (RCC2) from Homo sapiens (Human).